The sequence spans 196 residues: Mpv17-like protein (196 aa).

The Cytoplasmic segment spans residues Met-1–Pro-16. A targeting to peroxisomes region spans residues Pro-16–Ala-55. Residues Trp-17–Leu-34 form a helical membrane-spanning segment. Residues Gln-35 to His-50 lie on the Lumenal side of the membrane. A helical membrane pass occupies residues Val-51–Leu-67. Residues Asn-68–Gln-90 lie on the Cytoplasmic side of the membrane. The helical transmembrane segment at Ala-91–Leu-108 threads the bilayer. The Lumenal segment spans residues Gln-109 to Thr-150. A helical membrane pass occupies residues Ala-151–Ser-167. Residues Gln-168–Lys-196 lie on the Cytoplasmic side of the membrane.

This sequence belongs to the peroxisomal membrane protein PXMP2/4 family.

The protein resides in the peroxisome membrane. Its function is as follows. Participates in reactive oxygen species metabolism by up- or down-regulation of the genes of antioxidant enzymes. Protective against the mitochondrial apoptotic cascade. This chain is Mpv17-like protein (MPV17L), found in Bos taurus (Bovine).